Reading from the N-terminus, the 313-residue chain is MSHSRHRAEAPPLQREDSGTFSLGKMITAKPGKTPIQVLHEYGTKTKNIPVYECERSDVQVHVPTFTFRVTVGDITCTGEGTSKKLAKHRAAEAAINILKANASICFAVPDPLMPDPSKQPKNQLNPIGSLQELAIHHGWRLPEYTLSQEGGPAHKREYTTICRLESFMETGKGASKKQAKRNAAEKFLAKFSNISPENHISLTNVVGHSLGCTWHSLRNSPGEKINLLKRSLLSLPNTDYIQLLSEIAKEQGFSITYLDIEELSANGQYQCLAELSTSPITVCHGSGISCGNAQSDAAHNALQYLKIIAERK.

Residues 1 to 20 (MSHSRHRAEAPPLQREDSGT) form a disordered region. Sufficient for self-association and interaction with TARBP2 stretches follow at residues 1 to 103 (MSHS…KANA), 102 to 195 (NASI…FSNI), and 195 to 313 (ISPE…AERK). Serine 18 is subject to Phosphoserine. DRBM domains are found at residues 34–101 (TPIQ…ILKA), 126–194 (NPIG…KFSN), and 240–308 (DYIQ…YLKI). Phosphoserine occurs at positions 167, 246, and 287.

Belongs to the PRKRA family. As to quaternary structure, homodimer. Interacts with EIF2AK2/PKR through its DRBM domains. Interacts with DICER1, AGO2 and TARBP2. Also able to interact with dsRNA. Interacts with UBC9. Forms a complex with UBC9 and p53/TP53. Interacts with DUS2L (via DRBM domain). Phosphorylated at Ser-246 in unstressed cells and at Ser-287 in stressed cells. Phosphorylation at Ser-246 appears to be a prerequisite for subsequent phosphorylation at Ser-287. Phosphorylation at Ser-246 and Ser-287 are necessary for activation of EIF2AK2/PKR under conditions of stress.

It is found in the cytoplasm. The protein localises to the perinuclear region. Functionally, activates EIF2AK2/PKR in the absence of double-stranded RNA (dsRNA), leading to phosphorylation of EIF2S1/EFI2-alpha and inhibition of translation and induction of apoptosis. Required for siRNA production by DICER1 and for subsequent siRNA-mediated post-transcriptional gene silencing. Does not seem to be required for processing of pre-miRNA to miRNA by DICER1. Promotes UBC9-p53/TP53 association, sumoylation and phosphorylation of p53/TP53 at 'Lys-386' at 'Ser-392' respectively and enhances its activity in a EIF2AK2/PKR-dependent manner. The protein is Interferon-inducible double-stranded RNA-dependent protein kinase activator A (Prkra) of Rattus norvegicus (Rat).